The following is a 360-amino-acid chain: Peptide chain release factor 1 (360 aa).

An N5-methylglutamine modification is found at Q235. The tract at residues 284–313 is disordered; sequence AKRQQAEASTRRNLLGSGDRSDRNRTYNFP.

The protein belongs to the prokaryotic/mitochondrial release factor family. Post-translationally, methylated by PrmC. Methylation increases the termination efficiency of RF1.

It is found in the cytoplasm. Its function is as follows. Peptide chain release factor 1 directs the termination of translation in response to the peptide chain termination codons UAG and UAA. This Escherichia coli (strain UTI89 / UPEC) protein is Peptide chain release factor 1.